Reading from the N-terminus, the 243-residue chain is MKMINLDSKKLASFYVACELFKQIQQYPHTKLGLATGGTMTDVYHYLVNLLTKNKADVSQVETFNLDEYVGLKASHQQSYHTYMNKVLFEQYPHFAKNHIHIPDGYSENLEAEAERYNKLLDERGPIDIQILGIGENGHIGFNEPGTDFNSETHVVNLTESTIKANSRYFDNEADVPRQAVSMGLASILKAKRIILLAFGPKKKEAISKLLNEQVTEDVPATILHTHPNVEVYVDDDAAPDCL.

Asp67 acts as the Proton acceptor; for enolization step in catalysis. The active-site For ring-opening step is the Asn137. The active-site Proton acceptor; for ring-opening step is His139. Residue Glu144 is the For ring-opening step of the active site.

The protein belongs to the glucosamine/galactosamine-6-phosphate isomerase family. NagB subfamily.

It carries out the reaction alpha-D-glucosamine 6-phosphate + H2O = beta-D-fructose 6-phosphate + NH4(+). It participates in amino-sugar metabolism; N-acetylneuraminate degradation; D-fructose 6-phosphate from N-acetylneuraminate: step 5/5. Its function is as follows. Catalyzes the reversible isomerization-deamination of glucosamine 6-phosphate (GlcN6P) to form fructose 6-phosphate (Fru6P) and ammonium ion. The protein is Glucosamine-6-phosphate deaminase of Staphylococcus epidermidis (strain ATCC 35984 / DSM 28319 / BCRC 17069 / CCUG 31568 / BM 3577 / RP62A).